We begin with the raw amino-acid sequence, 92 residues long: Conotoxin Ac8.1 (92 aa).

The N-terminal stretch at 1-19 (LKMGAMFVLLLLFTLASSQ) is a signal peptide. A propeptide spanning residues 20-44 (QEGDVQARKTSLKSDFYRALRQYDR) is cleaved from the precursor. Gln45 bears the Pyrrolidone carboxylic acid mark.

Belongs to the conotoxin S superfamily. In terms of processing, contains 5 disulfide bonds. In terms of tissue distribution, expressed by the venom duct.

Its subcellular location is the secreted. The chain is Conotoxin Ac8.1 from Conus achatinus (Little frog cone).